The chain runs to 296 residues: 33 kDa chaperonin (296 aa).

2 disulfide bridges follow: cysteine 238–cysteine 240 and cysteine 271–cysteine 274.

It belongs to the HSP33 family. In terms of processing, under oxidizing conditions two disulfide bonds are formed involving the reactive cysteines. Under reducing conditions zinc is bound to the reactive cysteines and the protein is inactive.

The protein resides in the cytoplasm. Its function is as follows. Redox regulated molecular chaperone. Protects both thermally unfolding and oxidatively damaged proteins from irreversible aggregation. Plays an important role in the bacterial defense system toward oxidative stress. The chain is 33 kDa chaperonin from Clostridium botulinum (strain Loch Maree / Type A3).